The sequence spans 7603 residues: Cysteine repeat modular protein B (7603 aa).

N-linked (GlcNAc...) asparagine glycosylation is present at N172. Residues 223–243 (LVGFFLVPVFVVFFVLSSDAT) traverse the membrane as a helical segment. 2 disordered regions span residues 248–275 (GVGV…SSPG) and 291–323 (RDTK…GKGF). A compositionally biased stretch (low complexity) spans 263–275 (SVSSSSRASSSPG). Basic residues predominate over residues 302 to 313 (SSRRSARARRRR). N329, N589, N848, N1128, N1183, and N1402 each carry an N-linked (GlcNAc...) asparagine glycan. The segment at 1554–1574 (VLRSRSGPSHPSSVSQPSPSF) is disordered. The segment covering 1557–1573 (SRSGPSHPSSVSQPSPS) has biased composition (low complexity). N-linked (GlcNAc...) asparagine glycosylation is found at N1622, N2578, N2664, N3094, and N3126. The interval 3316–3445 (SNAVPEADEN…SDLTTSQPED (130 aa)) is disordered. Positions 3321–3340 (EADENQVESAEPEQNAEGET) are enriched in acidic residues. Low complexity predominate over residues 3342 to 3360 (EQGAEEAGGNAAEPGAESG). Residues N3546, N4367, N4823, N4901, N5186, N5546, and N5666 are each glycosylated (N-linked (GlcNAc...) asparagine). Residues 5758 to 5799 (LAESRSDDGTVGDDVDLDDNALSGTTNSGWTTSSSNSERVRK) form a disordered region. The span at 5767 to 5776 (TVGDDVDLDD) shows a compositional bias: acidic residues. The segment covering 5780–5794 (SGTTNSGWTTSSSNS) has biased composition (low complexity). 5 N-linked (GlcNAc...) asparagine glycosylation sites follow: N5806, N5876, N5998, N6055, and N6369. The tract at residues 6043-6115 (GEADHTPADG…EASEAESVSA (73 aa)) is disordered. A compositionally biased stretch (polar residues) spans 6051–6060 (DGSSNSSEDS). Basic and acidic residues predominate over residues 6391–6405 (EFTDTGPAPDDHTDE). Residues 6391–6436 (EFTDTGPAPDDHTDEGGANLDSTGGSGEPSSSAPVDPSGENEGQLL) form a disordered region. Residues 6410 to 6423 (LDSTGGSGEPSSSA) show a composition bias toward polar residues. N-linked (GlcNAc...) asparagine glycosylation occurs at N6453. 8 helical membrane-spanning segments follow: residues 6520 to 6540 (IFIL…ALTI), 6552 to 6572 (VLIR…LMPA), 6578 to 6598 (LAGW…ALHP), 6627 to 6647 (IFVP…CVAT), 6770 to 6790 (LILG…GFVA), 6831 to 6851 (CVAL…QEIF), 6888 to 6908 (GLMV…FEVF), and 6912 to 6932 (GAIP…SLFV). N7013 is a glycosylation site (N-linked (GlcNAc...) asparagine). A helical transmembrane segment spans residues 7017–7037 (FVAALSDSLSQLVIAWCQFTI). The N-linked (GlcNAc...) asparagine glycan is linked to N7061. A coiled-coil region spans residues 7174-7242 (APQLRKENHA…RGLIESEIDD (69 aa)). A disordered region spans residues 7379 to 7603 (AAPAAGLRSH…LKKPGSPKQE (225 aa)). The span at 7408–7417 (LGTNLSTPSA) shows a compositional bias: polar residues. Residue N7411 is glycosylated (N-linked (GlcNAc...) asparagine). Low complexity-rich tracts occupy residues 7474–7496 (PTPS…SVTP), 7509–7541 (SEAP…SSDL), and 7560–7582 (GEAA…AAQP).

Component of a complex, at least composed of cysteine repeat modular protein A (CRMPa), cysteine repeat modular protein B (CRMPb), micronemal protein 15 (MIC15) and thrombospondin type 1 domain-containing protein (TSP1).

The protein resides in the cell membrane. Its subcellular location is the endoplasmic reticulum. The protein localises to the golgi apparatus. Functionally, required for triggering rhoptry secretion. Plays a role in host cell invasion. The protein is Cysteine repeat modular protein B of Toxoplasma gondii.